A 226-amino-acid polypeptide reads, in one-letter code: Cytidylate kinase (226 aa).

12-20 (GPSGAGKGT) serves as a coordination point for ATP.

This sequence belongs to the cytidylate kinase family. Type 1 subfamily.

Its subcellular location is the cytoplasm. The catalysed reaction is CMP + ATP = CDP + ADP. The enzyme catalyses dCMP + ATP = dCDP + ADP. This is Cytidylate kinase from Xanthomonas campestris pv. campestris (strain 8004).